A 101-amino-acid chain; its full sequence is Large ribosomal subunit protein uL24 (101 aa).

It belongs to the universal ribosomal protein uL24 family. Part of the 50S ribosomal subunit.

In terms of biological role, one of two assembly initiator proteins, it binds directly to the 5'-end of the 23S rRNA, where it nucleates assembly of the 50S subunit. Functionally, one of the proteins that surrounds the polypeptide exit tunnel on the outside of the subunit. In Streptococcus uberis (strain ATCC BAA-854 / 0140J), this protein is Large ribosomal subunit protein uL24.